A 333-amino-acid chain; its full sequence is Alpha-N-acetylgalactosaminide alpha-2,6-sialyltransferase 6 (333 aa).

Positions 1–12 (MACSRPPSQCEP) are enriched in polar residues. Positions 1–26 (MACSRPPSQCEPTSLPPGPPAGRRHL) are disordered. Topologically, residues 1-43 (MACSRPPSQCEPTSLPPGPPAGRRHLPLSRRRREMSSNKEQRS) are cytoplasmic. A helical; Signal-anchor for type II membrane protein transmembrane segment spans residues 44–64 (AVFVILFALITILILYSSNSA). Topologically, residues 65–333 (NEVFHYGSLR…GITFSHPSWT (269 aa)) are lumenal. Residue N98 is glycosylated (N-linked (GlcNAc...) asparagine). Residues C108 and C256 are joined by a disulfide bond.

Belongs to the glycosyltransferase 29 family. As to expression, expressed in kidney, in proximal tubule epithelial cells. Expressed in colon cell lines.

It is found in the golgi apparatus membrane. It carries out the reaction a ganglioside GM1b (d18:1(4E)) + CMP-N-acetyl-beta-neuraminate = a ganglioside GD1alpha (d18:1(4E)) + CMP + H(+). The enzyme catalyses N-acetyl-alpha-neuraminosyl-(2-&gt;3)-beta-D-galactosyl-(1-&gt;3)-N-acetyl-beta-D-glucosaminyl-(1-&gt;3)-beta-D-galactosyl-(1-&gt;4)-beta-D-glucosyl-(1&lt;-&gt;1')-N-acyl-sphing-4-enine + CMP-N-acetyl-beta-neuraminate = N-acetyl-alpha-neuraminosyl-(2-&gt;3)-beta-D-galactosyl-(1-&gt;3)-[N-acetyl-alpha-neuraminosyl-(2-&gt;6)]-N-acetyl-beta-D-glucosaminyl-(1-&gt;3)-beta-D-galactosyl-(1-&gt;4)-beta-D-glucosyl-(1&lt;-&gt;1')-N-acyl-sphing-4-enine + CMP + H(+). It catalyses the reaction a globoside MSGG + CMP-N-acetyl-beta-neuraminate = a globoside DSGG + CMP + H(+). The catalysed reaction is a ganglioside GD1a (d18:1(4E)) + CMP-N-acetyl-beta-neuraminate = a ganglioside GT1aalpha (d18:1(4E)) + CMP + H(+). It carries out the reaction a ganglioside GT1b (d18:1(4E)) + CMP-N-acetyl-beta-neuraminate = a ganglioside GQ1balpha (d18:1(4E)) + CMP + H(+). The enzyme catalyses 3-O-[alpha-Neu5Ac-(2-&gt;3)-beta-D-Gal-(1-&gt;3)-alpha-D-GalNAc]-L-Ser-[protein] + CMP-N-acetyl-beta-neuraminate = a 3-O-{alpha-Neu5Ac-(2-&gt;3)-beta-D-Gal-(1-&gt;3)-[alpha-Neu5Ac-(2-&gt;6)]-alpha-D-GalNAc}-L-seryl-[protein] + CMP + H(+). It catalyses the reaction 3-O-[alpha-Neu5Ac-(2-&gt;3)-beta-D-Gal-(1-&gt;3)-alpha-D-GalNAc]-L-Thr-[protein] + CMP-N-acetyl-beta-neuraminate = a 3-O-{alpha-Neu5Ac-(2-&gt;3)-beta-D-Gal-(1-&gt;3)-[alpha-Neu5Ac-(2-&gt;6)]-alpha-D-GalNAc}-L-threonyl-[protein] + CMP + H(+). Its function is as follows. Transfers the sialyl group (N-acetyl-alpha-neuraminyl or NeuAc) from CMP-NeuAc onto glycoproteins and glycolipids, forming an alpha-2,6-linkage. Produces branched type disialyl structures by transfer of a sialyl group onto the GalNAc or GlcNAc residue inside backbone core chains having a terminal sialic acid with an alpha-2,3-linkage on Gal. ST6GalNAcVI prefers glycolipids to glycoproteins, predominantly catalyzing the biosynthesis of ganglioside GD1alpha from GM1b. Besides GMb1, MSGG and other glycolipids, it shows activity towards sialyl Lc4Cer generating disialyl Lc4Cer, which can lead to the synthesis of disialyl Lewis a (Le(a)), suggested to be a cancer-associated antigen. Also has activity toward GD1a and GT1b, and can generate DSGG (disialylgalactosylgloboside) from MSGG (monosialylgalactosylgloboside). In Homo sapiens (Human), this protein is Alpha-N-acetylgalactosaminide alpha-2,6-sialyltransferase 6 (ST6GALNAC6).